A 165-amino-acid chain; its full sequence is MTMSIRIGNGYDIHRLVSDRALILGGVHIPHELGLLGHSDADVLTHAIMDAMLGALSLGDIGHYFPPTDPQWAGADSLVLLSQVNELIRTQGWRIGNIDSVVVAERPKLKPHIKTMRDKLADILQLEPNQIGVKATTNEKLGPVGREEGICAYAVVLLVSSDEIS.

Residues Asp12 and His14 each contribute to the a divalent metal cation site. 4-CDP-2-C-methyl-D-erythritol 2-phosphate is bound by residues 12 to 14 (DIH) and 38 to 39 (HS). His46 contributes to the a divalent metal cation binding site. 4-CDP-2-C-methyl-D-erythritol 2-phosphate contacts are provided by residues 60-62 (DIG), 136-139 (TTNE), and Arg146.

The protein belongs to the IspF family. In terms of assembly, homotrimer. It depends on a divalent metal cation as a cofactor.

The catalysed reaction is 4-CDP-2-C-methyl-D-erythritol 2-phosphate = 2-C-methyl-D-erythritol 2,4-cyclic diphosphate + CMP. Its pathway is isoprenoid biosynthesis; isopentenyl diphosphate biosynthesis via DXP pathway; isopentenyl diphosphate from 1-deoxy-D-xylulose 5-phosphate: step 4/6. Involved in the biosynthesis of isopentenyl diphosphate (IPP) and dimethylallyl diphosphate (DMAPP), two major building blocks of isoprenoid compounds. Catalyzes the conversion of 4-diphosphocytidyl-2-C-methyl-D-erythritol 2-phosphate (CDP-ME2P) to 2-C-methyl-D-erythritol 2,4-cyclodiphosphate (ME-CPP) with a corresponding release of cytidine 5-monophosphate (CMP). In Nostoc sp. (strain PCC 7120 / SAG 25.82 / UTEX 2576), this protein is 2-C-methyl-D-erythritol 2,4-cyclodiphosphate synthase.